The primary structure comprises 225 residues: Uracil-DNA glycosylase (225 aa).

The active-site Proton acceptor is Asp65.

The protein belongs to the uracil-DNA glycosylase (UDG) superfamily. UNG family.

It localises to the cytoplasm. The enzyme catalyses Hydrolyzes single-stranded DNA or mismatched double-stranded DNA and polynucleotides, releasing free uracil.. Excises uracil residues from the DNA which can arise as a result of misincorporation of dUMP residues by DNA polymerase or due to deamination of cytosine. The protein is Uracil-DNA glycosylase of Bacillus cereus (strain AH187).